Reading from the N-terminus, the 522-residue chain is Cytochrome b mRNA maturase bI3 (522 aa).

Topologically, residues 1 to 31 are mitochondrial matrix; it reads MTIRKSNPYLSLVNSYLMDSPQPSSMNYWWN. The tract at residues 1-163 is cytochrome b; it reads MTIRKSNPYL…MPFMGGDLVP (163 aa). Residues 32 to 52 traverse the membrane as a helical segment; the sequence is VGSLLGLCLVMQMASGMFLAM. At 53 to 84 the chain is on the mitochondrial intermembrane side; the sequence is HYSSSMELAFNSVEHMMRDVNAGWLMRYIHAN. Residues 85-105 form a helical membrane-spanning segment; sequence GASFFFMCLYLHMGKALYYGS. Topologically, residues 106 to 110 are mitochondrial matrix; the sequence is YKSPR. A helical transmembrane segment spans residues 111-131; the sequence is VLVWSMGVMMFMLTMATAFMG. At 132-154 the chain is on the mitochondrial intermembrane side; that stretch reads YCLVYGQMSHWGATVITNLLSAM. Residues 155 to 175 traverse the membrane as a helical segment; that stretch reads PFMGGDLVPLSIILSLYLLYI. A maturase region spans residues 164 to 522; that stretch reads LSIILSLYLL…PYMSWHQKEQ (359 aa). The Mitochondrial matrix segment spans residues 176–522; that stretch reads SLKTFMKMIF…PYMSWHQKEQ (347 aa).

The protein in the N-terminal section; belongs to the cytochrome b family. It in the C-terminal section; belongs to the LAGLIDADG endonuclease family.

Its subcellular location is the mitochondrion inner membrane. Mitochondrial mRNA maturase required for splicing of intron 3 of the cytochrome b (COB) gene, containing its own coding sequence. The sequence is that of Cytochrome b mRNA maturase bI3 (bI3) from Debaryomyces hansenii (strain ATCC 36239 / CBS 767 / BCRC 21394 / JCM 1990 / NBRC 0083 / IGC 2968) (Yeast).